Here is a 299-residue protein sequence, read N- to C-terminus: MSDVTGDLAAVSEAKGGSDAARISEVKAWLTSQFEAVGKEVPNFEYTHRSITHLYNLATASQAKSQAATIVANDFRLKASEYRAQAARIREILESAGMSQESLPSNVVSSAQVLANVANLLNIRDTELSSFLVAMGDISLRKTGVEEKRAKAQKESNALLDYTRKAIQRLTYLKKILAQLEDDVVPCESQMENWKTNLEVMAVKEEQYIQQYKKYEQMLLNRVGYTPKISHRELVEMAEHRKELDKMTKPVLDTLRSYQDLPPDKALAALAIEDKKRQFTAAEKYLEEVLQSALETNDE.

N-acetylserine is present on Ser2. Coiled-coil stretches lie at residues 76 to 96 and 164 to 184; these read RLKA…LESA and RKAI…EDDV.

It belongs to the HAUS1 family. In terms of assembly, part of the augmin complex composed of 8 subunits. The complex acts on microtubules and interacts with gamma-tubulin in spindles and the phragmoplast. Interacts with AUG3.

The protein localises to the cytoplasm. It localises to the cytoskeleton. The protein resides in the spindle. It is found in the phragmoplast. Its function is as follows. Involved in microtubules reorganization during spindle and phragmoplast development. The protein is AUGMIN subunit 1 of Arabidopsis thaliana (Mouse-ear cress).